We begin with the raw amino-acid sequence, 127 residues long: Glycine cleavage system H protein (127 aa).

The Lipoyl-binding domain maps to Thr24 to Lys105. The residue at position 65 (Lys65) is an N6-lipoyllysine.

Belongs to the GcvH family. In terms of assembly, the glycine cleavage system is composed of four proteins: P, T, L and H. It depends on (R)-lipoate as a cofactor.

The glycine cleavage system catalyzes the degradation of glycine. The H protein shuttles the methylamine group of glycine from the P protein to the T protein. The sequence is that of Glycine cleavage system H protein from Chlorobaculum tepidum (strain ATCC 49652 / DSM 12025 / NBRC 103806 / TLS) (Chlorobium tepidum).